Reading from the N-terminus, the 316-residue chain is Pentatricopeptide repeat-containing protein At1g19525 (316 aa).

6 PPR repeats span residues 9-43 (DILT…GLRP), 44-78 (DEKI…ELKA), 79-113 (SEEV…SDGP), 115-149 (SFEA…GHKP), 150-184 (DDKC…GIEI), and 185-219 (GVIT…GEAP).

This sequence belongs to the PPR family. P subfamily.

This chain is Pentatricopeptide repeat-containing protein At1g19525, found in Arabidopsis thaliana (Mouse-ear cress).